The following is a 214-amino-acid chain: Ubiquitin-conjugating enzyme E2 21 (214 aa).

The UBC core domain maps to A21 to N168. The Glycyl thioester intermediate role is filled by C106. The 43-residue stretch at D172 to D214 folds into the UBA domain.

It belongs to the ubiquitin-conjugating enzyme family.

It catalyses the reaction S-ubiquitinyl-[E1 ubiquitin-activating enzyme]-L-cysteine + [E2 ubiquitin-conjugating enzyme]-L-cysteine = [E1 ubiquitin-activating enzyme]-L-cysteine + S-ubiquitinyl-[E2 ubiquitin-conjugating enzyme]-L-cysteine.. It participates in protein modification; protein ubiquitination. Acts with E3 ubiquitin-protein ligase trim-21 to catalyze the 'Lys-48'-linked polyubiquitination of ced-1, promoting its proteasomal degradation to maintain appropriate ced-1 levels for apoptotic cell clearance. This Caenorhabditis elegans protein is Ubiquitin-conjugating enzyme E2 21 (ubc-21).